We begin with the raw amino-acid sequence, 277 residues long: Basic leucine zipper 9 (277 aa).

The disordered stretch occupies residues Ala73 to Lys141. A Phosphoserine modification is found at Ser100. The segment covering Ala109–Pro118 has biased composition (polar residues). Positions Asp120–Leu183 constitute a bZIP domain. The segment at Lys122–Lys141 is basic motif. Positions Ile124–Arg131 match the Nuclear localization signal motif. The interval Leu148–Leu162 is leucine-zipper.

It belongs to the bZIP family. As to quaternary structure, homodimer. Interacts with BZIP1, BZIP2, BZIP10, BZIP11, BZIP25, BZIP44, BZIP53 and BZIP63. In terms of processing, phosphorylated. Expressed in roots, shoots, stems, young leaves, and flowers, mostly in vascular tissues (e.g. phloem).

Its subcellular location is the nucleus. Transcription factor. The protein is Basic leucine zipper 9 (BZIP9) of Arabidopsis thaliana (Mouse-ear cress).